The primary structure comprises 547 residues: ATP synthase subunit alpha (547 aa).

172–179 (GDRKTGKT) provides a ligand contact to ATP.

It belongs to the ATPase alpha/beta chains family. As to quaternary structure, F-type ATPases have 2 components, CF(1) - the catalytic core - and CF(0) - the membrane proton channel. CF(1) has five subunits: alpha(3), beta(3), gamma(1), delta(1), epsilon(1). CF(0) has three main subunits: a(1), b(2) and c(9-12). The alpha and beta chains form an alternating ring which encloses part of the gamma chain. CF(1) is attached to CF(0) by a central stalk formed by the gamma and epsilon chains, while a peripheral stalk is formed by the delta and b chains.

Its subcellular location is the cell membrane. The catalysed reaction is ATP + H2O + 4 H(+)(in) = ADP + phosphate + 5 H(+)(out). Functionally, produces ATP from ADP in the presence of a proton gradient across the membrane. The alpha chain is a regulatory subunit. This Rhodococcus erythropolis (strain PR4 / NBRC 100887) protein is ATP synthase subunit alpha.